Here is a 21-residue protein sequence, read N- to C-terminus: Hemocyanin subunit 6 (21 aa).

The protein belongs to the tyrosinase family. Hemocyanin subfamily. In terms of tissue distribution, hemolymph.

Its subcellular location is the secreted. It is found in the extracellular space. In terms of biological role, hemocyanins are copper-containing oxygen carriers occurring freely dissolved in the hemolymph of many mollusks and arthropods. This Maja squinado (Mediterranean spider crab) protein is Hemocyanin subunit 6.